A 64-amino-acid chain; its full sequence is Large ribosomal subunit protein bL35 (64 aa).

The span at 1–15 (MPKQKSHSGASKRFR) shows a compositional bias: basic residues. Positions 1 to 22 (MPKQKSHSGASKRFRVTGSGKV) are disordered.

Belongs to the bacterial ribosomal protein bL35 family.

This Frankia casuarinae (strain DSM 45818 / CECT 9043 / HFP020203 / CcI3) protein is Large ribosomal subunit protein bL35.